The primary structure comprises 180 residues: Pro-glucagon (180 aa).

An N-terminal signal peptide occupies residues 1-20 (MKSIYFVAGLFVMLVQGSWQ). The segment at 26-56 (TEEKSRSFSAPQTEPLNDLDQMNEDKRHSQG) is disordered. Ser-54 carries the phosphoserine modification. The propeptide occupies 84–89 (NKNNIA). Residues Ser-105 and Ser-108 each carry the phosphoserine modification. Residue Arg-127 is modified to Arginine amide. Positions 131-145 (DFPEEVAIVEEFRRR) are excised as a propeptide. Residues Ser-150 and Ser-152 each carry the phosphoserine modification.

The protein belongs to the glucagon family. Post-translationally, proglucagon is post-translationally processed in a tissue-specific manner in pancreatic A cells and intestinal L cells. In pancreatic A cells, the major bioactive hormone is glucagon cleaved by PCSK2/PC2. In the intestinal L cells PCSK1/PC1 liberates GLP-1, GLP-2, glicentin and oxyntomodulin. GLP-1 is further N-terminally truncated by post-translational processing in the intestinal L cells resulting in GLP-1(7-37) GLP-1-(7-36)amide. The C-terminal amidation is neither important for the metabolism of GLP-1 nor for its effects on the endocrine pancreas. Glucagon is secreted in the A cells of the islets of Langerhans. GLP-1, GLP-2, oxyntomodulin and glicentin are secreted from enteroendocrine cells throughout the gastrointestinal tract. GLP-1 and GLP-2 are also secreted in selected neurons in the brain.

The protein resides in the secreted. Functionally, plays a key role in glucose metabolism and homeostasis. Regulates blood glucose by increasing gluconeogenesis and decreasing glycolysis. A counterregulatory hormone of insulin, raises plasma glucose levels in response to insulin-induced hypoglycemia. Plays an important role in initiating and maintaining hyperglycemic conditions in diabetes. In terms of biological role, potent stimulator of glucose-dependent insulin release. Also stimulates insulin release in response to IL6. Plays important roles on gastric motility and the suppression of plasma glucagon levels. May be involved in the suppression of satiety and stimulation of glucose disposal in peripheral tissues, independent of the actions of insulin. Has growth-promoting activities on intestinal epithelium. May also regulate the hypothalamic pituitary axis (HPA) via effects on LH, TSH, CRH, oxytocin, and vasopressin secretion. Increases islet mass through stimulation of islet neogenesis and pancreatic beta cell proliferation. Inhibits beta cell apoptosis. Its function is as follows. Stimulates intestinal growth and up-regulates villus height in the small intestine, concomitant with increased crypt cell proliferation and decreased enterocyte apoptosis. The gastrointestinal tract, from the stomach to the colon is the principal target for GLP-2 action. Plays a key role in nutrient homeostasis, enhancing nutrient assimilation through enhanced gastrointestinal function, as well as increasing nutrient disposal. Stimulates intestinal glucose transport and decreases mucosal permeability. Significantly reduces food intake. Inhibits gastric emptying in humans. Suppression of gastric emptying may lead to increased gastric distension, which may contribute to satiety by causing a sensation of fullness. Functionally, may modulate gastric acid secretion and the gastro-pyloro-duodenal activity. May play an important role in intestinal mucosal growth in the early period of life. This Canis lupus familiaris (Dog) protein is Pro-glucagon (GCG).